The sequence spans 396 residues: UDP-galactose translocator (396 aa).

10 helical membrane-spanning segments follow: residues 3–23 (AVGA…AGAL), 37–57 (YISL…IRYA), 65–85 (FFAT…CLLL), 97–117 (LVLF…KLAV), 140–160 (TFQV…VLML), 169–189 (WASL…QAGG), 200–220 (GAGL…GVYF), 238–258 (LGLF…GTAV), 269–289 (PAVW…AVVV), and 315–335 (LFGF…IGAV). The segment at 358–379 (PCVHQQPPGQPPPPQLSSHRGD) is disordered. An ER retention motif motif is present at residues 392 to 396 (KVKGS).

The protein belongs to the nucleotide-sugar transporter family. SLC35A subfamily. As to quaternary structure, interacts with SLC35A3; the interaction is reduced in the presence of SLC35A4. Found in a complex with SLC35A3 and SLC35A4. Interacts with B4GALT4.

It is found in the endoplasmic reticulum membrane. Its subcellular location is the golgi apparatus membrane. The catalysed reaction is UMP(out) + UDP-alpha-D-galactose(in) = UMP(in) + UDP-alpha-D-galactose(out). It catalyses the reaction UDP-N-acetyl-alpha-D-galactosamine(in) + UMP(out) = UDP-N-acetyl-alpha-D-galactosamine(out) + UMP(in). The enzyme catalyses UMP(out) + UDP-alpha-D-glucose(in) = UMP(in) + UDP-alpha-D-glucose(out). It carries out the reaction UMP(out) + UDP-N-acetyl-alpha-D-glucosamine(in) = UMP(in) + UDP-N-acetyl-alpha-D-glucosamine(out). The catalysed reaction is UDP-alpha-D-galactose(in) + AMP(out) = UDP-alpha-D-galactose(out) + AMP(in). It catalyses the reaction UDP-alpha-D-galactose(in) + CMP(out) = UDP-alpha-D-galactose(out) + CMP(in). The enzyme catalyses UDP-N-acetyl-alpha-D-galactosamine(out) + UDP-alpha-D-galactose(in) = UDP-N-acetyl-alpha-D-galactosamine(in) + UDP-alpha-D-galactose(out). It carries out the reaction UDP-N-acetyl-alpha-D-glucosamine(out) + UDP-alpha-D-galactose(in) = UDP-N-acetyl-alpha-D-glucosamine(in) + UDP-alpha-D-galactose(out). The catalysed reaction is UDP-alpha-D-galactose(in) + UDP-alpha-D-glucose(out) = UDP-alpha-D-galactose(out) + UDP-alpha-D-glucose(in). It catalyses the reaction UMP(out) + CMP(in) = UMP(in) + CMP(out). The enzyme catalyses UMP(out) + AMP(in) = UMP(in) + AMP(out). Functionally, transports uridine diphosphate galactose (UDP-galactose) from the cytosol into the Golgi apparatus, functioning as an antiporter that exchanges UDP-galactose for UMP. It is also able to exchange UDP-galactose for AMP and CMP, and to transport UDP-N-acetylgalactosamine (UDP-GalNAc) and other nucleotide sugars. As a provider of UDP-galactose to galactosyltransferases present in the Golgi apparatus, it is necessary for globotriaosylceramide/globoside (Gb3Cer) synthesis from lactosylceramide. The protein is UDP-galactose translocator of Homo sapiens (Human).